The chain runs to 370 residues: Gibberellin 2-beta-dioxygenase 2 (370 aa).

One can recognise a Fe2OG dioxygenase domain in the interval 186–306; sequence DNDSLIRINH…RLSTIYFAAP (121 aa). Y196 serves as a coordination point for 2-oxoglutarate. Fe cation-binding residues include H224, D226, and H287. Positions 297 and 299 each coordinate 2-oxoglutarate.

This sequence belongs to the iron/ascorbate-dependent oxidoreductase family. GA2OX subfamily. Fe(2+) serves as cofactor.

The enzyme catalyses gibberellin A1 + 2-oxoglutarate + O2 = gibberellin A8 + succinate + CO2. In terms of biological role, catalyzes the 2-beta-hydroxylation of several biologically active gibberellins, leading to the homeostatic regulation of their endogenous level. Catabolism of gibberellins (GAs) plays a central role in plant development. The chain is Gibberellin 2-beta-dioxygenase 2 from Oryza sativa subsp. japonica (Rice).